Consider the following 400-residue polypeptide: Deoxyguanosinetriphosphate triphosphohydrolase-like protein (400 aa).

In terms of domain architecture, HD spans 76–204 (RLTHTLEVAQ…VNIADPLAYC (129 aa)).

Belongs to the dGTPase family. Type 2 subfamily.

This chain is Deoxyguanosinetriphosphate triphosphohydrolase-like protein, found in Syntrophus aciditrophicus (strain SB).